A 187-amino-acid polypeptide reads, in one-letter code: MVEALILGWNPEYEPLKGWILNAAVTTKIFIDIFIGVWAFILAVVWVYWIERRPGEKVEKVEIWYRFPKFVIGYFLTFVIVAWLTSAAINAYAASLGVSVSELTTEQFKAAYAPFSAAVNEMNSLRRIFFALTFFSIGVISDFSVLRKEGLGRLALVYFVCLFGFIIWIGLAISYLFFHDVHLLFLK.

Transmembrane regions (helical) follow at residues Ile29 to Ile50, Phe70 to Tyr92, Ile128 to Arg147, and Leu154 to Leu176.

It is found in the cell membrane. This is an uncharacterized protein from Archaeoglobus fulgidus (strain ATCC 49558 / DSM 4304 / JCM 9628 / NBRC 100126 / VC-16).